We begin with the raw amino-acid sequence, 398 residues long: Serpin-Z1C (398 aa).

The interval 343–367 (GTEAAASTAIKMALLQARPPSVMDF) is RCL.

The protein belongs to the serpin family.

Inhibits chymotrypsin and cathepsin G in vitro. The polypeptide is Serpin-Z1C (Triticum aestivum (Wheat)).